We begin with the raw amino-acid sequence, 235 residues long: Purine nucleoside phosphorylase DeoD-type (235 aa).

H4 is an a purine D-ribonucleoside binding site. Phosphate contacts are provided by residues G20, R24, R43, and 87-90 (RVGT). A purine D-ribonucleoside contacts are provided by residues 179–181 (EME) and 203–204 (SN).

This sequence belongs to the PNP/UDP phosphorylase family. As to quaternary structure, homohexamer; trimer of homodimers.

The enzyme catalyses a purine D-ribonucleoside + phosphate = a purine nucleobase + alpha-D-ribose 1-phosphate. It catalyses the reaction a purine 2'-deoxy-D-ribonucleoside + phosphate = a purine nucleobase + 2-deoxy-alpha-D-ribose 1-phosphate. In terms of biological role, catalyzes the reversible phosphorolytic breakdown of the N-glycosidic bond in the beta-(deoxy)ribonucleoside molecules, with the formation of the corresponding free purine bases and pentose-1-phosphate. The protein is Purine nucleoside phosphorylase DeoD-type of Levilactobacillus brevis (strain ATCC 367 / BCRC 12310 / CIP 105137 / JCM 1170 / LMG 11437 / NCIMB 947 / NCTC 947) (Lactobacillus brevis).